The primary structure comprises 291 residues: Formamidopyrimidine-DNA glycosylase (291 aa).

Pro-2 (schiff-base intermediate with DNA) is an active-site residue. Residue Glu-3 is the Proton donor of the active site. Lys-58 serves as the catalytic Proton donor; for beta-elimination activity. DNA contacts are provided by His-104, Arg-123, and Lys-166. Residues 257–291 (KVYDREGKPCPTCGGTVQRFVQNGRSTFWCPKCQK) form an FPG-type zinc finger. Catalysis depends on Arg-281, which acts as the Proton donor; for delta-elimination activity.

It belongs to the FPG family. In terms of assembly, monomer. Zn(2+) serves as cofactor.

It catalyses the reaction Hydrolysis of DNA containing ring-opened 7-methylguanine residues, releasing 2,6-diamino-4-hydroxy-5-(N-methyl)formamidopyrimidine.. The enzyme catalyses 2'-deoxyribonucleotide-(2'-deoxyribose 5'-phosphate)-2'-deoxyribonucleotide-DNA = a 3'-end 2'-deoxyribonucleotide-(2,3-dehydro-2,3-deoxyribose 5'-phosphate)-DNA + a 5'-end 5'-phospho-2'-deoxyribonucleoside-DNA + H(+). Functionally, involved in base excision repair of DNA damaged by oxidation or by mutagenic agents. Acts as a DNA glycosylase that recognizes and removes damaged bases. Has a preference for oxidized purines, such as 7,8-dihydro-8-oxoguanine (8-oxoG). Has AP (apurinic/apyrimidinic) lyase activity and introduces nicks in the DNA strand. Cleaves the DNA backbone by beta-delta elimination to generate a single-strand break at the site of the removed base with both 3'- and 5'-phosphates. The protein is Formamidopyrimidine-DNA glycosylase of Rhodopseudomonas palustris (strain TIE-1).